Here is a 590-residue protein sequence, read N- to C-terminus: MTLHNNNTTSPLFPNISSSWIHGPSDAGLPPGTVTHFGSYNISQAAGNFSSPNGTTSDPLGGHTIWQVVFIAFLTGILALVTIIGNILVIVAFKVNKQLKTVNNYFLLSLACADLIIGVISMNLFTTYIIMNRWALGNLACDLWLSIDYVASNASVMNLLVISFDRYFSITRPLTYRAKRTTKRAGVMIGLAWVISFILWAPAILFWQYFVGKRTVPPGECFIQFLSEPTITFGTAIAAFYMPVTIMTILYWRIYKETEKRTKELAGLQASGTEAEAENFVHPTGSSRSCSSYELQQQSLKRSARRKYGRCHFWFTTKSWKPSAEQMDQDHSSSDSWNNNDAAASLENSASSDEEDIGSETRAIYSIVLKLPGHSTILNSTKLPSSDNLQVPEEELGTVDLERKASKLQAQKSMDDGGSFQKSFSKLPIQLESAVDTAKASDVNSSVGKTTATLPLSFKEATLAKRFALKTRSQITKRKRMSLIKEKKAAQTLSAILLAFIITWTPYNIMVLVNTFCDSCIPKTYWNLGYWLCYINSTVNPVCYALCNKTFRTTFKMLLLCQCDKRKRRKQQYQQRQSVIFHKRVPEQAL.

Topologically, residues 1-67 (MTLHNNNTTS…DPLGGHTIWQ (67 aa)) are extracellular. N-linked (GlcNAc...) asparagine glycans are attached at residues Asn6, Asn7, Asn15, Asn41, Asn48, and Asn53. Residues 68–91 (VVFIAFLTGILALVTIIGNILVIV) traverse the membrane as a helical segment. Over 92–104 (AFKVNKQLKTVNN) the chain is Cytoplasmic. Residues 105–130 (YFLLSLACADLIIGVISMNLFTTYII) form a helical membrane-spanning segment. The Extracellular segment spans residues 131 to 142 (MNRWALGNLACD). Cys141 and Cys221 are joined by a disulfide. Residues 143–164 (LWLSIDYVASNASVMNLLVISF) traverse the membrane as a helical segment. The Cytoplasmic portion of the chain corresponds to 165–184 (DRYFSITRPLTYRAKRTTKR). A helical transmembrane segment spans residues 185-206 (AGVMIGLAWVISFILWAPAILF). Topologically, residues 207-229 (WQYFVGKRTVPPGECFIQFLSEP) are extracellular. Residues 230–252 (TITFGTAIAAFYMPVTIMTILYW) form a helical membrane-spanning segment. At 253-491 (RIYKETEKRT…SLIKEKKAAQ (239 aa)) the chain is on the cytoplasmic side. The Basolateral sorting signal signature appears at 275-281 (AEAENFV). Residues 324 to 357 (AEQMDQDHSSSDSWNNNDAAASLENSASSDEEDI) form a disordered region. Residues 334–345 (SDSWNNNDAAAS) show a composition bias toward low complexity. At Ser385 the chain carries Phosphoserine. Residues 492–514 (TLSAILLAFIITWTPYNIMVLVN) traverse the membrane as a helical segment. The Extracellular portion of the chain corresponds to 515-526 (TFCDSCIPKTYW). Cys517 and Cys520 are oxidised to a cystine. Residues 527–546 (NLGYWLCYINSTVNPVCYAL) traverse the membrane as a helical segment. The Cytoplasmic portion of the chain corresponds to 547–590 (CNKTFRTTFKMLLLCQCDKRKRRKQQYQQRQSVIFHKRVPEQAL).

Belongs to the G-protein coupled receptor 1 family. Muscarinic acetylcholine receptor subfamily. CHRM3 sub-subfamily. Homodimer; the dimers can form tetramers. Interacts with NALCN. Interacts with TMEM147.

Its subcellular location is the cell membrane. It localises to the postsynaptic cell membrane. The protein resides in the basolateral cell membrane. The protein localises to the endoplasmic reticulum membrane. In terms of biological role, the muscarinic acetylcholine receptor mediates various cellular responses, including inhibition of adenylate cyclase, breakdown of phosphoinositides and modulation of potassium channels through the action of G proteins. Primary transducing effect is Pi turnover. This Sus scrofa (Pig) protein is Muscarinic acetylcholine receptor M3 (CHRM3).